A 149-amino-acid polypeptide reads, in one-letter code: Oligosaccharyltransferase complex subunit OSTC (149 aa).

Over 1–32 (METLYRVPFLVLECPNLKLKKPPWLHMPSAMT) the chain is Cytoplasmic. The helical transmembrane segment at 33 to 53 (VYALVVVSYFLITGGIIYDVI) threads the bilayer. At 54-83 (VEPPSVGSMTDEHGHQRPVAFLAYRVNGQY) the chain is on the extracellular side. The helical transmembrane segment at 84–104 (IMEGLASSFLFTMGGLGFIIL) threads the bilayer. Residues 105 to 117 (DRSNAPNIPKLNR) lie on the Cytoplasmic side of the membrane. A helical membrane pass occupies residues 118–138 (FLLLFIGFVCVLLSFFMARVF). Residues 139 to 149 (MRMKLPGYLMG) lie on the Extracellular side of the membrane.

Belongs to the OSTC family. As to quaternary structure, component of STT3A-containing oligosaccharyl transferase (OST-A) complex. STT3A-containing complex assembly occurs through the formation of 3 subcomplexes. Subcomplex 1 contains RPN1 and TMEM258, subcomplex 2 contains the STT3A-specific subunits STT3A, DC2/OSTC, and KCP2 as well as the core subunit OST4, and subcomplex 3 contains RPN2, DAD1, and OST48. The OST-A complex can form stable complexes with the Sec61 complex or with both the Sec61 and TRAP complexes. Interacts with PSEN1 and NCSTN; indicative for an association with the gamma-secretase complex.

The protein resides in the endoplasmic reticulum. The protein localises to the membrane. It functions in the pathway protein modification; protein glycosylation. In terms of biological role, subunit of STT3A-containing oligosaccharyl transferase (OST-A) complex that catalyzes the initial transfer of a defined glycan (Glc(3)Man(9)GlcNAc(2) in eukaryotes) from the lipid carrier dolichol-pyrophosphate to an asparagine residue within an Asn-X-Ser/Thr consensus motif in nascent polypeptide chains, the first step in protein N-glycosylation. N-glycosylation occurs cotranslationally and the complex associates with the Sec61 complex at the channel-forming translocon complex that mediates protein translocation across the endoplasmic reticulum (ER). Within the OST-A complex, acts as an adapter that anchors the OST-A complex to the Sec61 complex. May be involved in N-glycosylation of APP (amyloid-beta precursor protein). Can modulate gamma-secretase cleavage of APP by enhancing endoprotelysis of PSEN1. This is Oligosaccharyltransferase complex subunit OSTC from Homo sapiens (Human).